We begin with the raw amino-acid sequence, 58 residues long: Arabinogalactan protein 21 (58 aa).

The N-terminal stretch at 1–24 (MEAMKMKMMVFIMVVAVAFSAATA) is a signal peptide. 4-hydroxyproline is present on residues proline 30, proline 32, and proline 34. O-linked (Ara...) hydroxyproline glycosylation is found at proline 30, proline 32, and proline 34. A lipid anchor (GPI-anchor amidated serine) is attached at serine 36. A propeptide spans 37–58 (DAAMFVPALFASVVALASGFIF) (removed in mature form).

Belongs to the AG-peptide AGP family. Contains 4-hydroxyproline; hydroxylated on Pro-30, Pro-32 and Pro-34. In terms of processing, O-glycosylated on hydroxyprolines; noncontiguous hydroxylproline residues are glycosylated with arabinogalactan.

Its subcellular location is the cell membrane. Its function is as follows. Proteoglycan that seems to be implicated in diverse developmental roles such as differentiation, cell-cell recognition, embryogenesis and programmed cell death. This chain is Arabinogalactan protein 21, found in Arabidopsis thaliana (Mouse-ear cress).